We begin with the raw amino-acid sequence, 267 residues long: L-aspartate dehydrogenase (267 aa).

Residues A124 and N190 each contribute to the NAD(+) site. H218 is a catalytic residue.

Belongs to the L-aspartate dehydrogenase family.

It carries out the reaction L-aspartate + NADP(+) + H2O = oxaloacetate + NH4(+) + NADPH + H(+). The enzyme catalyses L-aspartate + NAD(+) + H2O = oxaloacetate + NH4(+) + NADH + H(+). Its pathway is cofactor biosynthesis; NAD(+) biosynthesis; iminoaspartate from L-aspartate (dehydrogenase route): step 1/1. Functionally, specifically catalyzes the NAD or NADP-dependent dehydrogenation of L-aspartate to iminoaspartate. The protein is L-aspartate dehydrogenase of Methanococcus maripaludis (strain C5 / ATCC BAA-1333).